Reading from the N-terminus, the 407-residue chain is Peptidase T (407 aa).

His-82 serves as a coordination point for Zn(2+). Residue Asp-84 is part of the active site. A Zn(2+)-binding site is contributed by Asp-143. Glu-177 serves as the catalytic Proton acceptor. Residues Glu-178, Asp-200, and His-382 each contribute to the Zn(2+) site.

The protein belongs to the peptidase M20B family. The cofactor is Zn(2+).

The protein resides in the cytoplasm. The enzyme catalyses Release of the N-terminal residue from a tripeptide.. Cleaves the N-terminal amino acid of tripeptides. The protein is Peptidase T of Streptococcus uberis (strain ATCC BAA-854 / 0140J).